Reading from the N-terminus, the 609-residue chain is Aspartate--tRNA(Asp/Asn) ligase (609 aa).

E177 is a binding site for L-aspartate. The aspartate stretch occupies residues 201-204; it reads QLFK. Residue R223 participates in L-aspartate binding. ATP is bound by residues 223-225 and Q232; that span reads RDE. H461 serves as a coordination point for L-aspartate. E499 contacts ATP. An L-aspartate-binding site is contributed by R506. 551–554 is an ATP binding site; the sequence is GVDR.

This sequence belongs to the class-II aminoacyl-tRNA synthetase family. Type 1 subfamily. As to quaternary structure, homodimer.

The protein resides in the cytoplasm. It catalyses the reaction tRNA(Asx) + L-aspartate + ATP = L-aspartyl-tRNA(Asx) + AMP + diphosphate. In terms of biological role, aspartyl-tRNA synthetase with relaxed tRNA specificity since it is able to aspartylate not only its cognate tRNA(Asp) but also tRNA(Asn). Reaction proceeds in two steps: L-aspartate is first activated by ATP to form Asp-AMP and then transferred to the acceptor end of tRNA(Asp/Asn). The sequence is that of Aspartate--tRNA(Asp/Asn) ligase from Synechococcus sp. (strain CC9605).